The following is a 156-amino-acid chain: Small ribosomal subunit protein uS7 (156 aa).

Belongs to the universal ribosomal protein uS7 family. In terms of assembly, part of the 30S ribosomal subunit. Contacts proteins S9 and S11.

One of the primary rRNA binding proteins, it binds directly to 16S rRNA where it nucleates assembly of the head domain of the 30S subunit. Is located at the subunit interface close to the decoding center, probably blocks exit of the E-site tRNA. This is Small ribosomal subunit protein uS7 from Anaeromyxobacter dehalogenans (strain 2CP-1 / ATCC BAA-258).